The sequence spans 372 residues: Alanine dehydrogenase 2 (372 aa).

Residue histidine 95 is part of the active site. 169–199 (KVTIIGGGQAGTNAAKIALGLGADVTILDVN) is an NAD(+) binding site.

Belongs to the AlaDH/PNT family.

The enzyme catalyses L-alanine + NAD(+) + H2O = pyruvate + NH4(+) + NADH + H(+). The protein operates within amino-acid degradation; L-alanine degradation via dehydrogenase pathway; NH(3) and pyruvate from L-alanine: step 1/1. In terms of biological role, may play a role in cell wall synthesis as L-alanine is an important constituent of the peptidoglycan layer. This is Alanine dehydrogenase 2 (ald2) from Staphylococcus aureus (strain MRSA252).